A 140-amino-acid chain; its full sequence is Small ribosomal subunit protein uS19 (140 aa).

The disordered stretch occupies residues 120-140; that stretch reads RPKHSAPGIGATRSSAHVSKK. The segment covering 131–140 has biased composition (polar residues); it reads TRSSAHVSKK.

It belongs to the universal ribosomal protein uS19 family.

Its function is as follows. Protein S19 forms a complex with S13 that binds strongly to the 16S ribosomal RNA. This Nanoarchaeum equitans (strain Kin4-M) protein is Small ribosomal subunit protein uS19.